A 446-amino-acid chain; its full sequence is Exodeoxyribonuclease 7 large subunit (446 aa).

The protein belongs to the XseA family. In terms of assembly, heterooligomer composed of large and small subunits.

It localises to the cytoplasm. The catalysed reaction is Exonucleolytic cleavage in either 5'- to 3'- or 3'- to 5'-direction to yield nucleoside 5'-phosphates.. In terms of biological role, bidirectionally degrades single-stranded DNA into large acid-insoluble oligonucleotides, which are then degraded further into small acid-soluble oligonucleotides. In Streptococcus pyogenes serotype M6 (strain ATCC BAA-946 / MGAS10394), this protein is Exodeoxyribonuclease 7 large subunit.